Consider the following 391-residue polypeptide: Fructose-bisphosphate aldolase 3, chloroplastic (391 aa).

Residues 1–40 (MASASFVKPNTLSSPWIGQRSFAHTSASSSPPPRVSFAIR) constitute a chloroplast transit peptide. Residue Arg88 participates in substrate binding. Residue Ser150 is modified to Phosphoserine. Substrate is bound at residue Lys178. Ser208 is modified (phosphoserine). The active-site Proton acceptor is the Glu218. Catalysis depends on Lys260, which acts as the Schiff-base intermediate with dihydroxyacetone-P. Residue 302-304 (SGG) participates in substrate binding. Lys387 carries the N6,N6,N6-trimethyllysine modification.

This sequence belongs to the class I fructose-bisphosphate aldolase family. In terms of assembly, homotetramer. In terms of processing, can be trimethylated at Lys-387 by LSMT-L, but the trimethylation has no effect in vitro. Post-translationally, S-glutathionylated. In terms of tissue distribution, expressed in roots, and at low levels in rosettes leaves, cauline leaves, stems and flowers.

The protein resides in the plastid. The protein localises to the chloroplast. It localises to the plastoglobule. It catalyses the reaction beta-D-fructose 1,6-bisphosphate = D-glyceraldehyde 3-phosphate + dihydroxyacetone phosphate. Its pathway is carbohydrate degradation; glycolysis; D-glyceraldehyde 3-phosphate and glycerone phosphate from D-glucose: step 4/4. Its function is as follows. Plays a key role in glycolysis and gluconeogenesis. This Arabidopsis thaliana (Mouse-ear cress) protein is Fructose-bisphosphate aldolase 3, chloroplastic.